A 385-amino-acid chain; its full sequence is Tryptophan--tRNA ligase (385 aa).

The 'HIGH' region signature appears at 82-90; it reads PSGPMHIGH. A 'KMSKS' region motif is present at residues 253-257; the sequence is KMSAS.

Belongs to the class-I aminoacyl-tRNA synthetase family.

Its subcellular location is the cytoplasm. The enzyme catalyses tRNA(Trp) + L-tryptophan + ATP = L-tryptophyl-tRNA(Trp) + AMP + diphosphate + H(+). The sequence is that of Tryptophan--tRNA ligase from Pyrococcus abyssi (strain GE5 / Orsay).